The chain runs to 238 residues: Ankyrin repeat domain-containing protein 49 (238 aa).

The interval 38 to 57 (TGTQSLWVGNSDEDEEQEEK) is disordered. At serine 48 the chain carries Phosphoserine. Positions 48-57 (SDEDEEQEEK) are enriched in acidic residues. ANK repeat units lie at residues 72–105 (DPSK…TRDE), 106–135 (DEYT…DVHA), 139–168 (DGWT…DINA), and 172–205 (GLLT…ELKN).

As to expression, expressed in spermatogonia, spermatocytes and round spermatids.

It is found in the nucleus. Its function is as follows. May have a role in spermatogenesis where it promotes autophagy in response to serum starvation, via the NF-kappaB pathway. The protein is Ankyrin repeat domain-containing protein 49 (Ankrd49) of Mus musculus (Mouse).